The following is a 316-amino-acid chain: Ribosomal RNA small subunit methyltransferase H (316 aa).

S-adenosyl-L-methionine contacts are provided by residues 35–37, D55, F84, D105, and Q112; that span reads SGH.

The protein belongs to the methyltransferase superfamily. RsmH family.

It localises to the cytoplasm. The catalysed reaction is cytidine(1402) in 16S rRNA + S-adenosyl-L-methionine = N(4)-methylcytidine(1402) in 16S rRNA + S-adenosyl-L-homocysteine + H(+). Specifically methylates the N4 position of cytidine in position 1402 (C1402) of 16S rRNA. This is Ribosomal RNA small subunit methyltransferase H from Streptococcus pyogenes serotype M49 (strain NZ131).